A 210-amino-acid polypeptide reads, in one-letter code: Syntaxin-binding protein 6 (210 aa).

Ser-2 carries the N-acetylserine modification. Positions 151-210 (GNSILHSAADSVTSAVQKASQALNERGERLGRAEEKTEDLKNSAQQFAETAHKLAMKHKC) constitute a v-SNARE coiled-coil homology domain.

In terms of assembly, part of a ternary complex containing SNAP25 and STX1A that can be dissociated by NAPA and NSF. Interacts with STX4A.

It localises to the cytoplasm. The protein localises to the membrane. Forms non-fusogenic complexes with SNAP25 and STX1A and may thereby modulate the formation of functional SNARE complexes and exocytosis. The chain is Syntaxin-binding protein 6 (STXBP6) from Bos taurus (Bovine).